We begin with the raw amino-acid sequence, 287 residues long: CBK1 kinase activator protein MOB2 (287 aa).

The interval 1–89 (MSFFNFKAFG…QQQEASERSE (89 aa)) is disordered. Tyr-33 carries the post-translational modification Phosphotyrosine. The span at 34 to 44 (SSPHSSNSRLS) shows a compositional bias: low complexity. Residues 45–56 (LRNKHHSPKRHS) are compositionally biased toward basic residues. A Phosphoserine modification is found at Ser-59. Residues 63 to 83 (QKSTPQSQQLTSTTPQSQQQE) are compositionally biased toward low complexity. Thr-76 bears the Phosphothreonine mark.

This sequence belongs to the MOB1/phocein family. Interacts with protein kinase CBK1 to form the RAM CBK1-MOB2 kinase complex.

Its subcellular location is the nucleus. The protein resides in the cytoplasm. Functionally, functions as an activator subunit for the CBK1 protein kinase. Part of the regulation of ACE2 activity and cellular morphogenesis (RAM) signaling network. Required for coordinating polarized cell growth during interphase with the onset of mitosis. Required for mother/daughter cell separation after cytokinesis. Also has a role in the prevention of nuclear export of ACE2 from the daughter cell nucleus after mitotic exit. It coordinates ACE2-dependent transcription with mitotic exit network activation. This is CBK1 kinase activator protein MOB2 (MOB2) from Saccharomyces cerevisiae (strain ATCC 204508 / S288c) (Baker's yeast).